The following is a 388-amino-acid chain: Methylthioribose-1-phosphate isomerase (388 aa).

Asp253 functions as the Proton donor in the catalytic mechanism.

It belongs to the eIF-2B alpha/beta/delta subunits family. MtnA subfamily.

The protein localises to the cytoplasm. Its subcellular location is the nucleus. The enzyme catalyses 5-(methylsulfanyl)-alpha-D-ribose 1-phosphate = 5-(methylsulfanyl)-D-ribulose 1-phosphate. The protein operates within amino-acid biosynthesis; L-methionine biosynthesis via salvage pathway; L-methionine from S-methyl-5-thio-alpha-D-ribose 1-phosphate: step 1/6. Functionally, catalyzes the interconversion of methylthioribose-1-phosphate (MTR-1-P) into methylthioribulose-1-phosphate (MTRu-1-P). This chain is Methylthioribose-1-phosphate isomerase, found in Fusarium vanettenii (strain ATCC MYA-4622 / CBS 123669 / FGSC 9596 / NRRL 45880 / 77-13-4) (Fusarium solani subsp. pisi).